The following is a 507-amino-acid chain: Histidine ammonia-lyase (507 aa).

Residues 141–143 (ASG) constitute a cross-link (5-imidazolinone (Ala-Gly)). Residue Ser142 is modified to 2,3-didehydroalanine (Ser).

The protein belongs to the PAL/histidase family. In terms of processing, contains an active site 4-methylidene-imidazol-5-one (MIO), which is formed autocatalytically by cyclization and dehydration of residues Ala-Ser-Gly.

The protein localises to the cytoplasm. It carries out the reaction L-histidine = trans-urocanate + NH4(+). The protein operates within amino-acid degradation; L-histidine degradation into L-glutamate; N-formimidoyl-L-glutamate from L-histidine: step 1/3. In Burkholderia mallei (strain NCTC 10247), this protein is Histidine ammonia-lyase.